A 118-amino-acid chain; its full sequence is Large ribosomal subunit protein bL19 (118 aa).

This sequence belongs to the bacterial ribosomal protein bL19 family.

Its function is as follows. This protein is located at the 30S-50S ribosomal subunit interface and may play a role in the structure and function of the aminoacyl-tRNA binding site. The polypeptide is Large ribosomal subunit protein bL19 (Alcanivorax borkumensis (strain ATCC 700651 / DSM 11573 / NCIMB 13689 / SK2)).